Here is a 107-residue protein sequence, read N- to C-terminus: U1-lycotoxin-Ls1p (107 aa).

The N-terminal stretch at 1 to 20 is a signal peptide; sequence MMKVLVVVALLVTLISYSSS. Residues 21-41 constitute a propeptide that is removed on maturation; sequence EGIDDLEADELLSLMANEQTR. Intrachain disulfides connect cysteine 44/cysteine 59, cysteine 51/cysteine 68, cysteine 58/cysteine 86, and cysteine 70/cysteine 84.

This sequence belongs to the neurotoxin 19 (CSTX) family. 04 (U1-Lctx) subfamily. As to expression, expressed by the venom gland.

It is found in the secreted. This Lycosa singoriensis (Wolf spider) protein is U1-lycotoxin-Ls1p.